The chain runs to 358 residues: Putative spore germination protein YfkT (358 aa).

The next 10 membrane-spanning stretches (helical) occupy residues 10 to 30, 36 to 56, 81 to 101, 107 to 127, 143 to 163, 179 to 199, 210 to 230, 262 to 282, 297 to 317, and 326 to 346; these read LFFG…ILMI, NAWH…WLMH, IIIL…IRFF, ILFL…FVAI, IFLF…ATQI, LQSG…PLLF, IFAI…SISV, IIAA…LYIV, AMYT…FLNT, and IKPI…YLII.

This sequence belongs to the amino acid-polyamine-organocation (APC) superfamily. Spore germination protein (SGP) (TC 2.A.3.9) family.

Its subcellular location is the cell membrane. May be involved in spore germination. This is Putative spore germination protein YfkT (yfkT) from Bacillus subtilis (strain 168).